Consider the following 100-residue polypeptide: Large ribosomal subunit protein uL23 (100 aa).

Belongs to the universal ribosomal protein uL23 family. In terms of assembly, part of the 50S ribosomal subunit. Contacts protein L29, and trigger factor when it is bound to the ribosome.

Functionally, one of the early assembly proteins it binds 23S rRNA. One of the proteins that surrounds the polypeptide exit tunnel on the outside of the ribosome. Forms the main docking site for trigger factor binding to the ribosome. This is Large ribosomal subunit protein uL23 from Colwellia psychrerythraea (strain 34H / ATCC BAA-681) (Vibrio psychroerythus).